The chain runs to 538 residues: Putative outer membrane porin BglH (538 aa).

The N-terminal stretch at 1–25 is a signal peptide; sequence MFRQNLITSAILLMAPLAFSAQSLA. Positions 52–82 are disordered; it reads KDEEKKKYTPATVNRSVSTNDQGYAANPFPT. Polar residues predominate over residues 62–73; that stretch reads ATVNRSVSTNDQ.

This sequence belongs to the porin LamB (TC 1.B.3) family.

It is found in the cell outer membrane. In terms of biological role, may be a sugar porin with a broad carbohydrate specificity. The chain is Putative outer membrane porin BglH (bglH) from Shigella flexneri.